Reading from the N-terminus, the 379-residue chain is Alpha-humulene synthase eupE (379 aa).

It belongs to the terpene synthase family. Alpha-humulene synthase eupE subfamily. Requires Mg(2+) as cofactor.

It catalyses the reaction (2E,6E)-farnesyl diphosphate = alpha-humulene + diphosphate. It participates in secondary metabolite biosynthesis; terpenoid biosynthesis. Functionally, alpha-humulene synthase; part of the gene cluster that mediates the biosynthesis of eupenifeldin, a bistropolone meroterpenoid that acts as an antitumor agent. The first step of eupenifeldin biosynthesis is the biosynthesis of 3-methylorcinaldehyde performed by the non-reducing polyketide synthase eupA. Oxidative dearomatization of 3-methylorcinaldehyde likely catalyzed by the FAD-dependent monooxygenase eupB is followed by oxidative ring expansion by the 2-oxoglutarate-dependent dioxygenase eupC to provide the first tropolone metabolite, tropolone stipitaldehyde. In parallel, generation of sesquiterpene alpha-humulene from farnesylpyrophosphate (FPP) is catalyzed by the terpene cyclase eupE. The cytochrome P450 monooxygenase eupD then hydroxylates humulene to humulenol. The putative Diels-Alderase eupF probably catalyzes the formation of the tropolone-humulene skeleton by linking humulenol and the polyketide moiety. The short-chain dehydrogenase/reductase eupG and the flavin-dependent monooxygenase eupH are also essential for eupenifeldin biosynthesis and are likely the additional decorating enzymes of the tropolone-humulene skeleton to produce final eupenifeldin or derivatives. This Phoma sp protein is Alpha-humulene synthase eupE.